The chain runs to 321 residues: Beta-ketoacyl-[acyl-carrier-protein] synthase III (321 aa).

Active-site residues include Cys-115 and His-248. An ACP-binding region spans residues 249 to 253; it reads QANIR. Asn-278 is an active-site residue.

It belongs to the thiolase-like superfamily. FabH family. In terms of assembly, homodimer.

It is found in the cytoplasm. The catalysed reaction is malonyl-[ACP] + acetyl-CoA + H(+) = 3-oxobutanoyl-[ACP] + CO2 + CoA. Its pathway is lipid metabolism; fatty acid biosynthesis. Catalyzes the condensation reaction of fatty acid synthesis by the addition to an acyl acceptor of two carbons from malonyl-ACP. Catalyzes the first condensation reaction which initiates fatty acid synthesis and may therefore play a role in governing the total rate of fatty acid production. Possesses both acetoacetyl-ACP synthase and acetyl transacylase activities. Its substrate specificity determines the biosynthesis of branched-chain and/or straight-chain of fatty acids. The polypeptide is Beta-ketoacyl-[acyl-carrier-protein] synthase III (Aromatoleum aromaticum (strain DSM 19018 / LMG 30748 / EbN1) (Azoarcus sp. (strain EbN1))).